Consider the following 131-residue polypeptide: Profilin-4 (131 aa).

A disulfide bridge connects residues Cys13 and Cys115. An Involved in PIP2 interaction motif is present at residues 81 to 97 (AVIRGKKGAGGITVKKT). The residue at position 111 (Thr111) is a Phosphothreonine.

The protein belongs to the profilin family. In terms of assembly, occurs in many kinds of cells as a complex with monomeric actin in a 1:1 ratio. In terms of processing, phosphorylated by MAP kinases.

It is found in the cytoplasm. The protein resides in the cytoskeleton. Binds to actin and affects the structure of the cytoskeleton. At high concentrations, profilin prevents the polymerization of actin, whereas it enhances it at low concentrations. This chain is Profilin-4, found in Olea europaea (Common olive).